Reading from the N-terminus, the 1111-residue chain is Isoleucine--tRNA ligase (1111 aa).

Residues 52–62 (PFANGLPHYGH) carry the 'HIGH' region motif. The short motif at 645 to 649 (KLSKR) is the 'KMSKS' region element. ATP is bound at residue lysine 648.

It belongs to the class-I aminoacyl-tRNA synthetase family. IleS type 2 subfamily. Monomer. Zn(2+) serves as cofactor.

It is found in the cytoplasm. It catalyses the reaction tRNA(Ile) + L-isoleucine + ATP = L-isoleucyl-tRNA(Ile) + AMP + diphosphate. Functionally, catalyzes the attachment of isoleucine to tRNA(Ile). As IleRS can inadvertently accommodate and process structurally similar amino acids such as valine, to avoid such errors it has two additional distinct tRNA(Ile)-dependent editing activities. One activity is designated as 'pretransfer' editing and involves the hydrolysis of activated Val-AMP. The other activity is designated 'posttransfer' editing and involves deacylation of mischarged Val-tRNA(Ile). The protein is Isoleucine--tRNA ligase of Wolbachia pipientis wMel.